The chain runs to 116 residues: NADH-ubiquinone oxidoreductase chain 3 (116 aa).

3 helical membrane passes run 3–23 (LIMT…TVSF), 56–76 (FFLV…LLPL), and 87–107 (GTFF…IYEW).

Belongs to the complex I subunit 3 family.

The protein resides in the mitochondrion membrane. The enzyme catalyses a ubiquinone + NADH + 5 H(+)(in) = a ubiquinol + NAD(+) + 4 H(+)(out). In terms of biological role, core subunit of the mitochondrial membrane respiratory chain NADH dehydrogenase (Complex I) that is believed to belong to the minimal assembly required for catalysis. Complex I functions in the transfer of electrons from NADH to the respiratory chain. The immediate electron acceptor for the enzyme is believed to be ubiquinone. This Cyprinus carpio (Common carp) protein is NADH-ubiquinone oxidoreductase chain 3 (MT-ND3).